Here is a 244-residue protein sequence, read N- to C-terminus: Small ribosomal subunit protein eS4 (244 aa).

Residues 43-106 (LPLLLVVRDV…DENYLVLFDE (64 aa)) form the S4 RNA-binding domain.

The protein belongs to the eukaryotic ribosomal protein eS4 family.

The sequence is that of Small ribosomal subunit protein eS4 from Methanococcus maripaludis (strain C7 / ATCC BAA-1331).